The sequence spans 928 residues: 2-oxoglutarate dehydrogenase E1 component (928 aa).

It belongs to the alpha-ketoglutarate dehydrogenase family. In terms of assembly, homodimer. Part of the 2-oxoglutarate dehydrogenase (OGDH) complex composed of E1 (2-oxoglutarate dehydrogenase), E2 (dihydrolipoamide succinyltransferase) and E3 (dihydrolipoamide dehydrogenase); the complex contains multiple copies of the three enzymatic components (E1, E2 and E3). Thiamine diphosphate is required as a cofactor.

It carries out the reaction N(6)-[(R)-lipoyl]-L-lysyl-[protein] + 2-oxoglutarate + H(+) = N(6)-[(R)-S(8)-succinyldihydrolipoyl]-L-lysyl-[protein] + CO2. Functionally, E1 component of the 2-oxoglutarate dehydrogenase (OGDH) complex which catalyzes the decarboxylation of 2-oxoglutarate, the first step in the conversion of 2-oxoglutarate to succinyl-CoA and CO(2). The protein is 2-oxoglutarate dehydrogenase E1 component (sucA) of Rickettsia conorii (strain ATCC VR-613 / Malish 7).